The chain runs to 841 residues: Probable outer membrane protein pmp2 (841 aa).

An N-terminal signal peptide occupies residues 1 to 24 (MKIPLRFLLISLVPTLSMSNLLGA). The Autotransporter domain maps to 537-841 (GAPYEKRFWV…NVDAGSKIKF (305 aa)).

This sequence belongs to the PMP outer membrane protein family.

The protein resides in the secreted. It is found in the cell wall. It localises to the cell outer membrane. This Chlamydia pneumoniae (Chlamydophila pneumoniae) protein is Probable outer membrane protein pmp2 (pmp2).